The sequence spans 185 residues: Crossover junction endodeoxyribonuclease RuvC (185 aa).

Active-site residues include Asp7, Glu66, and Asp137. Mg(2+) is bound by residues Asp7, Glu66, and Asp137.

Belongs to the RuvC family. As to quaternary structure, homodimer which binds Holliday junction (HJ) DNA. The HJ becomes 2-fold symmetrical on binding to RuvC with unstacked arms; it has a different conformation from HJ DNA in complex with RuvA. In the full resolvosome a probable DNA-RuvA(4)-RuvB(12)-RuvC(2) complex forms which resolves the HJ. Requires Mg(2+) as cofactor.

It is found in the cytoplasm. The catalysed reaction is Endonucleolytic cleavage at a junction such as a reciprocal single-stranded crossover between two homologous DNA duplexes (Holliday junction).. Functionally, the RuvA-RuvB-RuvC complex processes Holliday junction (HJ) DNA during genetic recombination and DNA repair. Endonuclease that resolves HJ intermediates. Cleaves cruciform DNA by making single-stranded nicks across the HJ at symmetrical positions within the homologous arms, yielding a 5'-phosphate and a 3'-hydroxyl group; requires a central core of homology in the junction. The consensus cleavage sequence is 5'-(A/T)TT(C/G)-3'. Cleavage occurs on the 3'-side of the TT dinucleotide at the point of strand exchange. HJ branch migration catalyzed by RuvA-RuvB allows RuvC to scan DNA until it finds its consensus sequence, where it cleaves and resolves the cruciform DNA. In Anaeromyxobacter dehalogenans (strain 2CP-C), this protein is Crossover junction endodeoxyribonuclease RuvC.